Reading from the N-terminus, the 338-residue chain is Mycothiol acetyltransferase (338 aa).

N-acetyltransferase domains lie at 29-173 and 181-338; these read PETY…HQLP and ISLR…NKFQ. Position 55 (Asp55) interacts with 1D-myo-inositol 2-(L-cysteinylamino)-2-deoxy-alpha-D-glucopyranoside. Acetyl-CoA is bound at residue 105 to 107; it reads LVV. The 1D-myo-inositol 2-(L-cysteinylamino)-2-deoxy-alpha-D-glucopyranoside site is built by Glu208, Lys248, and Glu261. Acetyl-CoA-binding positions include 265 to 267 and 272 to 278; these read VGI and QGKGLGK. Tyr299 contributes to the 1D-myo-inositol 2-(L-cysteinylamino)-2-deoxy-alpha-D-glucopyranoside binding site.

It belongs to the acetyltransferase family. MshD subfamily. As to quaternary structure, monomer.

The catalysed reaction is 1D-myo-inositol 2-(L-cysteinylamino)-2-deoxy-alpha-D-glucopyranoside + acetyl-CoA = mycothiol + CoA + H(+). In terms of biological role, catalyzes the transfer of acetyl from acetyl-CoA to desacetylmycothiol (Cys-GlcN-Ins) to form mycothiol. The protein is Mycothiol acetyltransferase of Renibacterium salmoninarum (strain ATCC 33209 / DSM 20767 / JCM 11484 / NBRC 15589 / NCIMB 2235).